Consider the following 77-residue polypeptide: Surfactant-associated protein 2 (77 aa).

A signal peptide spans 1–19 (MESLMRLFLLLALLSSSHA). A glycan (N-linked (GlcNAc...) asparagine) is linked at Asn-61.

N-glycosylated. In terms of tissue distribution, expressed in lung, and specifically in alveolar type II epithelial cells.

The protein resides in the secreted. It localises to the cytoplasmic vesicle. Its subcellular location is the secretory vesicle. It is found in the golgi apparatus. Functionally, putative surfactant protein. The protein is Surfactant-associated protein 2 of Mus musculus (Mouse).